The sequence spans 447 residues: Tubulin beta chain (447 aa).

GTP-binding residues include Gln11, Glu69, Ser138, Gly142, Thr143, Gly144, Asn204, and Asn226. Glu69 provides a ligand contact to Mg(2+). Residues 424-447 (QYQEASVSDAEEEYDEEAPLEGEE) are disordered. A compositionally biased stretch (acidic residues) spans 432-447 (DAEEEYDEEAPLEGEE).

The protein belongs to the tubulin family. In terms of assembly, dimer of alpha and beta chains. A typical microtubule is a hollow water-filled tube with an outer diameter of 25 nm and an inner diameter of 15 nM. Alpha-beta heterodimers associate head-to-tail to form protofilaments running lengthwise along the microtubule wall with the beta-tubulin subunit facing the microtubule plus end conferring a structural polarity. Microtubules usually have 13 protofilaments but different protofilament numbers can be found in some organisms and specialized cells. Requires Mg(2+) as cofactor.

It is found in the cytoplasm. It localises to the cytoskeleton. In terms of biological role, tubulin is the major constituent of microtubules, a cylinder consisting of laterally associated linear protofilaments composed of alpha- and beta-tubulin heterodimers. Microtubules grow by the addition of GTP-tubulin dimers to the microtubule end, where a stabilizing cap forms. Below the cap, tubulin dimers are in GDP-bound state, owing to GTPase activity of alpha-tubulin. The sequence is that of Tubulin beta chain (TUB1) from Zymoseptoria tritici (Speckled leaf blotch fungus).